The chain runs to 71 residues: Phosphatidylinositol N-acetylglucosaminyltransferase subunit Y (71 aa).

Methionine 1 is a topological domain (cytoplasmic). A helical membrane pass occupies residues 2–21; sequence FFSLPVLTVLIPLVSLTGLL. Residues 22 to 44 are Lumenal-facing; the sequence is YSASVEEDFPNGCTSTASLCFYS. The chain crosses the membrane as a helical span at residues 45 to 65; it reads LLLPITLPVYVFFHLWTWMGL. At 66-71 the chain is on the cytoplasmic side; the sequence is KLFRHN.

In terms of assembly, component of the glycosylphosphatidylinositol-N-acetylglucosaminyltransferase (GPI-GnT) complex composed at least by PIGA, PIGC, PIGH, PIGP, PIGQ, PIGY and DPM2.

It is found in the endoplasmic reticulum membrane. It participates in glycolipid biosynthesis; glycosylphosphatidylinositol-anchor biosynthesis. In terms of biological role, part of the glycosylphosphatidylinositol-N-acetylglucosaminyltransferase (GPI-GnT) complex that catalyzes the transfer of N-acetylglucosamine from UDP-N-acetylglucosamine to phosphatidylinositol and participates in the first step of GPI biosynthesis. May act by regulating the catalytic subunit PIGA. The sequence is that of Phosphatidylinositol N-acetylglucosaminyltransferase subunit Y from Xenopus tropicalis (Western clawed frog).